The sequence spans 750 residues: 5-methyltetrahydropteroyltriglutamate--homocysteine methyltransferase (750 aa).

5-methyltetrahydropteroyltri-L-glutamate is bound by residues 15-18 and lysine 114; that span reads RELK. L-homocysteine contacts are provided by residues 425-427 and glutamate 478; that span reads IGS. Residues 425–427 and glutamate 478 each bind L-methionine; that span reads IGS. Tryptophan 555 is a binding site for 5-methyltetrahydropteroyltri-L-glutamate. L-homocysteine is bound at residue aspartate 593. Aspartate 593 is an L-methionine binding site. Glutamate 599 is a 5-methyltetrahydropteroyltri-L-glutamate binding site. Zn(2+) is bound by residues histidine 636, cysteine 638, and glutamate 660. Histidine 689 (proton donor) is an active-site residue. Cysteine 721 contacts Zn(2+).

It belongs to the vitamin-B12 independent methionine synthase family. Zn(2+) is required as a cofactor.

It carries out the reaction 5-methyltetrahydropteroyltri-L-glutamate + L-homocysteine = tetrahydropteroyltri-L-glutamate + L-methionine. Its pathway is amino-acid biosynthesis; L-methionine biosynthesis via de novo pathway; L-methionine from L-homocysteine (MetE route): step 1/1. Catalyzes the transfer of a methyl group from 5-methyltetrahydrofolate to homocysteine resulting in methionine formation. This Streptococcus sanguinis (strain SK36) protein is 5-methyltetrahydropteroyltriglutamate--homocysteine methyltransferase.